We begin with the raw amino-acid sequence, 887 residues long: DNA mismatch repair protein MutS (887 aa).

602–609 (GPNMSGKS) contacts ATP.

The protein belongs to the DNA mismatch repair MutS family.

Functionally, this protein is involved in the repair of mismatches in DNA. It is possible that it carries out the mismatch recognition step. This protein has a weak ATPase activity. The polypeptide is DNA mismatch repair protein MutS (Staphylococcus saprophyticus subsp. saprophyticus (strain ATCC 15305 / DSM 20229 / NCIMB 8711 / NCTC 7292 / S-41)).